Here is a 322-residue protein sequence, read N- to C-terminus: Breast cancer metastasis-suppressor 1-like protein (322 aa).

The segment covering 1 to 16 (MPVHSREKKESNHNDM) has biased composition (basic and acidic residues). Residues 1–56 (MPVHSREKKESNHNDMEVDYPENEGSSSEEDDSDSSSGSEEGDSSEMDDEDCERRR) are disordered. The segment covering 17 to 51 (EVDYPENEGSSSEEDDSDSSSGSEEGDSSEMDDED) has biased composition (acidic residues). Coiled coils occupy residues 50–99 (EDCE…QAQE) and 147–178 (EKLL…ITSE).

This sequence belongs to the BRMS1 family.

The protein resides in the nucleus. Functionally, involved in the histone deacetylase (HDAC1)-dependent transcriptional repression activity. The polypeptide is Breast cancer metastasis-suppressor 1-like protein (brms1l) (Xenopus laevis (African clawed frog)).